The following is a 118-amino-acid chain: Small ribosomal subunit protein uS13 (118 aa).

A disordered region spans residues 94 to 118; it reads SLPVRGQRTKTNARTRKGPRKPIKK.

Belongs to the universal ribosomal protein uS13 family. Part of the 30S ribosomal subunit. Forms a loose heterodimer with protein S19. Forms two bridges to the 50S subunit in the 70S ribosome.

Located at the top of the head of the 30S subunit, it contacts several helices of the 16S rRNA. In the 70S ribosome it contacts the 23S rRNA (bridge B1a) and protein L5 of the 50S subunit (bridge B1b), connecting the 2 subunits; these bridges are implicated in subunit movement. Contacts the tRNAs in the A and P-sites. This chain is Small ribosomal subunit protein uS13, found in Haemophilus influenzae (strain 86-028NP).